The primary structure comprises 1967 residues: RNA replication polyprotein (1967 aa).

An Alphavirus-like MT domain is found at Ser-63–Leu-252. A Fe2OG dioxygenase domain is found at Thr-750–Ala-841. Fe cation-binding residues include His-768, Asp-770, and His-823. Arg-832 is a binding site for 2-oxoglutarate. The OTU domain maps to Phe-884–Lys-991. Positions Pro-990 to Gly-1080 constitute a Peptidase C23 domain. Residues Cys-994 and His-1075 contribute to the active site. The (+)RNA virus helicase ATP-binding domain occupies Gly-1133–Leu-1308. An ATP-binding site is contributed by Gly-1166–Ser-1173. Positions Ser-1309 to Met-1455 constitute a (+)RNA virus helicase C-terminal domain. Residues Gly-1748 to His-1855 enclose the RdRp catalytic domain.

This sequence belongs to the potexviruses/carlaviruses RNA replication protein family. Fe(2+) is required as a cofactor. In terms of processing, specific enzymatic cleavages by the viral protease yield mature proteins.

The catalysed reaction is ATP + H2O = ADP + phosphate + H(+). It carries out the reaction RNA(n) + a ribonucleoside 5'-triphosphate = RNA(n+1) + diphosphate. Functionally, RNA-directed RNA polymerase involved in viral RNA replication. Protease: Thiol protease that cleaves the polyprotein. The sequence is that of RNA replication polyprotein from Vaccinium corymbosum (Highbush blueberry).